The primary structure comprises 132 residues: Small ribosomal subunit protein uS11 (132 aa).

A compositionally biased stretch (basic residues) spans 1-16; sequence MAAGMKGKRSRRRKER. The disordered stretch occupies residues 1-20; sequence MAAGMKGKRSRRRKERKNVE.

This sequence belongs to the universal ribosomal protein uS11 family. Part of the 30S ribosomal subunit. Interacts with proteins S7 and S18. Binds to IF-3.

Located on the platform of the 30S subunit, it bridges several disparate RNA helices of the 16S rRNA. Forms part of the Shine-Dalgarno cleft in the 70S ribosome. This is Small ribosomal subunit protein uS11 from Clostridium botulinum (strain Hall / ATCC 3502 / NCTC 13319 / Type A).